The primary structure comprises 368 residues: 3-dehydroquinate synthase (368 aa).

Residues 71 to 76, 105 to 109, 129 to 130, Lys142, and Lys151 contribute to the NAD(+) site; these read DGEAAK, GATTD, and TT. Zn(2+)-binding residues include Glu184, His247, and His263.

It belongs to the sugar phosphate cyclases superfamily. Dehydroquinate synthase family. The cofactor is Co(2+). It depends on Zn(2+) as a cofactor. Requires NAD(+) as cofactor.

Its subcellular location is the cytoplasm. It catalyses the reaction 7-phospho-2-dehydro-3-deoxy-D-arabino-heptonate = 3-dehydroquinate + phosphate. It participates in metabolic intermediate biosynthesis; chorismate biosynthesis; chorismate from D-erythrose 4-phosphate and phosphoenolpyruvate: step 2/7. Functionally, catalyzes the conversion of 3-deoxy-D-arabino-heptulosonate 7-phosphate (DAHP) to dehydroquinate (DHQ). The sequence is that of 3-dehydroquinate synthase from Thermobifida fusca (strain YX).